A 639-amino-acid polypeptide reads, in one-letter code: ATP-dependent zinc metalloprotease FtsH (639 aa).

At 1-4 (MNST) the chain is on the cytoplasmic side. The chain crosses the membrane as a helical span at residues 5 to 25 (VKTIVFWVFILACCILLWQVF). Over 26–104 (QRSSNTGKEQ…TVKDNSGSPW (79 aa)) the chain is Periplasmic. Residues 105–125 (WSILIQFSPVLVLVALWFFMI) traverse the membrane as a helical segment. Topologically, residues 126 to 639 (RQMQSGGNKA…GLPEGSPSPA (514 aa)) are cytoplasmic. Residue 196–203 (GPPGTGKT) coordinates ATP. A Zn(2+)-binding site is contributed by H418. E419 is an active-site residue. H422 and D494 together coordinate Zn(2+). The disordered stretch occupies residues 597–639 (KDLPPLKPSGGSGTATTDDVQQVLKPSSDRGAGGLPEGSPSPA).

It in the central section; belongs to the AAA ATPase family. In the C-terminal section; belongs to the peptidase M41 family. In terms of assembly, homohexamer. Requires Zn(2+) as cofactor.

It is found in the cell inner membrane. Functionally, acts as a processive, ATP-dependent zinc metallopeptidase for both cytoplasmic and membrane proteins. Plays a role in the quality control of integral membrane proteins. This Acidobacterium capsulatum (strain ATCC 51196 / DSM 11244 / BCRC 80197 / JCM 7670 / NBRC 15755 / NCIMB 13165 / 161) protein is ATP-dependent zinc metalloprotease FtsH.